A 123-amino-acid polypeptide reads, in one-letter code: Small ribosomal subunit protein uS12cz/uS12cy (123 aa).

Belongs to the universal ribosomal protein uS12 family. Part of the 30S ribosomal subunit.

It is found in the plastid. The protein localises to the chloroplast. With S4 and S5 plays an important role in translational accuracy. Located at the interface of the 30S and 50S subunits. The polypeptide is Small ribosomal subunit protein uS12cz/uS12cy (rps12-A) (Platanus occidentalis (Sycamore)).